The chain runs to 94 residues: C-C motif chemokine 17 (94 aa).

Residues 1-23 form the signal peptide; the sequence is MAPLKMLALVILLLGASLQHIHA. Disulfide bonds link Cys33–Cys57 and Cys34–Cys73.

The protein belongs to the intercrine beta (chemokine CC) family.

It is found in the secreted. Chemokine, which displays chemotactic activity for T lymphocytes, preferentially Th2 cells, but not monocytes or granulocytes. Therefore plays an important role in a wide range of inflammatory and immunological processes. Acts by binding to CCR4 at T-cell surface. Mediates GM-CSF/CSF2-driven pain and inflammation. In the brain, required to maintain the typical, highly branched morphology of hippocampal microglia under homeostatic conditions. May be important for the appropriate adaptation of microglial morphology and synaptic plasticity to acute lipopolysaccharide (LPS)-induced neuroinflammation. Plays a role in wound healing, mainly by inducing fibroblast migration into the wound. The polypeptide is C-C motif chemokine 17 (CCL17) (Macaca mulatta (Rhesus macaque)).